A 274-amino-acid polypeptide reads, in one-letter code: Hydroxyethylthiazole kinase (274 aa).

Methionine 54 is a substrate binding site. Arginine 129 and threonine 175 together coordinate ATP. Position 202 (glycine 202) interacts with substrate.

Belongs to the Thz kinase family. Mg(2+) is required as a cofactor.

The enzyme catalyses 5-(2-hydroxyethyl)-4-methylthiazole + ATP = 4-methyl-5-(2-phosphooxyethyl)-thiazole + ADP + H(+). It functions in the pathway cofactor biosynthesis; thiamine diphosphate biosynthesis; 4-methyl-5-(2-phosphoethyl)-thiazole from 5-(2-hydroxyethyl)-4-methylthiazole: step 1/1. Its function is as follows. Catalyzes the phosphorylation of the hydroxyl group of 4-methyl-5-beta-hydroxyethylthiazole (THZ). In Granulibacter bethesdensis (strain ATCC BAA-1260 / CGDNIH1), this protein is Hydroxyethylthiazole kinase.